The sequence spans 636 residues: 1-deoxy-D-xylulose-5-phosphate synthase (636 aa).

Residues His-72 and 113 to 115 (GHA) each bind thiamine diphosphate. Asp-144 contributes to the Mg(2+) binding site. Thiamine diphosphate-binding positions include 145 to 146 (GA), Asn-174, Tyr-287, and Glu-370. Asn-174 contacts Mg(2+).

The protein belongs to the transketolase family. DXPS subfamily. As to quaternary structure, homodimer. It depends on Mg(2+) as a cofactor. Thiamine diphosphate is required as a cofactor.

The enzyme catalyses D-glyceraldehyde 3-phosphate + pyruvate + H(+) = 1-deoxy-D-xylulose 5-phosphate + CO2. It participates in metabolic intermediate biosynthesis; 1-deoxy-D-xylulose 5-phosphate biosynthesis; 1-deoxy-D-xylulose 5-phosphate from D-glyceraldehyde 3-phosphate and pyruvate: step 1/1. Functionally, catalyzes the acyloin condensation reaction between C atoms 2 and 3 of pyruvate and glyceraldehyde 3-phosphate to yield 1-deoxy-D-xylulose-5-phosphate (DXP). The sequence is that of 1-deoxy-D-xylulose-5-phosphate synthase from Rippkaea orientalis (strain PCC 8801 / RF-1) (Cyanothece sp. (strain PCC 8801)).